The sequence spans 211 residues: FMN-dependent NADH:quinone oxidoreductase 2 (211 aa).

An FMN-binding site is contributed by 102-105; the sequence is MWNF.

This sequence belongs to the azoreductase type 1 family. Homodimer. FMN serves as cofactor.

The enzyme catalyses 2 a quinone + NADH + H(+) = 2 a 1,4-benzosemiquinone + NAD(+). It catalyses the reaction N,N-dimethyl-1,4-phenylenediamine + anthranilate + 2 NAD(+) = 2-(4-dimethylaminophenyl)diazenylbenzoate + 2 NADH + 2 H(+). In terms of biological role, quinone reductase that provides resistance to thiol-specific stress caused by electrophilic quinones. Its function is as follows. Also exhibits azoreductase activity. Catalyzes the reductive cleavage of the azo bond in aromatic azo compounds to the corresponding amines. The protein is FMN-dependent NADH:quinone oxidoreductase 2 of Bacillus thuringiensis subsp. konkukian (strain 97-27).